The following is a 662-amino-acid chain: Bifunctional polymyxin resistance protein ArnA (662 aa).

Residues 1-307 (MTSKAVVFAY…ELGLVEGARL (307 aa)) form a formyltransferase ArnAFT region. Histidine 106 serves as the catalytic Proton donor; for formyltransferase activity. (6R)-10-formyltetrahydrofolate is bound by residues arginine 116 and 138-142 (IERAD). The interval 316-662 (RRTRVLILGV…EALREREAQA (347 aa)) is dehydrogenase ArnADH. NAD(+) contacts are provided by residues aspartate 349 and 370–371 (DI). UDP-alpha-D-glucuronate-binding positions include alanine 395, tyrosine 400, and 434-435 (TS). Residue glutamate 436 is the Proton acceptor; for decarboxylase activity of the active site. Residues arginine 462, asparagine 493, 527–536 (RLVDGGAQKR), and tyrosine 614 contribute to the UDP-alpha-D-glucuronate site. The Proton donor; for decarboxylase activity role is filled by arginine 620.

It in the N-terminal section; belongs to the Fmt family. UDP-L-Ara4N formyltransferase subfamily. The protein in the C-terminal section; belongs to the NAD(P)-dependent epimerase/dehydratase family. UDP-glucuronic acid decarboxylase subfamily. As to quaternary structure, homohexamer, formed by a dimer of trimers.

It carries out the reaction UDP-alpha-D-glucuronate + NAD(+) = UDP-beta-L-threo-pentopyranos-4-ulose + CO2 + NADH. The enzyme catalyses UDP-4-amino-4-deoxy-beta-L-arabinose + (6R)-10-formyltetrahydrofolate = UDP-4-deoxy-4-formamido-beta-L-arabinose + (6S)-5,6,7,8-tetrahydrofolate + H(+). The protein operates within nucleotide-sugar biosynthesis; UDP-4-deoxy-4-formamido-beta-L-arabinose biosynthesis; UDP-4-deoxy-4-formamido-beta-L-arabinose from UDP-alpha-D-glucuronate: step 1/3. Its pathway is nucleotide-sugar biosynthesis; UDP-4-deoxy-4-formamido-beta-L-arabinose biosynthesis; UDP-4-deoxy-4-formamido-beta-L-arabinose from UDP-alpha-D-glucuronate: step 3/3. It participates in bacterial outer membrane biogenesis; lipopolysaccharide biosynthesis. Its function is as follows. Bifunctional enzyme that catalyzes the oxidative decarboxylation of UDP-glucuronic acid (UDP-GlcUA) to UDP-4-keto-arabinose (UDP-Ara4O) and the addition of a formyl group to UDP-4-amino-4-deoxy-L-arabinose (UDP-L-Ara4N) to form UDP-L-4-formamido-arabinose (UDP-L-Ara4FN). The modified arabinose is attached to lipid A and is required for resistance to polymyxin and cationic antimicrobial peptides. This Pseudomonas aeruginosa (strain ATCC 15692 / DSM 22644 / CIP 104116 / JCM 14847 / LMG 12228 / 1C / PRS 101 / PAO1) protein is Bifunctional polymyxin resistance protein ArnA.